The primary structure comprises 233 residues: Aspartate/glutamate leucyltransferase (233 aa).

It belongs to the R-transferase family. Bpt subfamily.

Its subcellular location is the cytoplasm. It carries out the reaction N-terminal L-glutamyl-[protein] + L-leucyl-tRNA(Leu) = N-terminal L-leucyl-L-glutamyl-[protein] + tRNA(Leu) + H(+). The catalysed reaction is N-terminal L-aspartyl-[protein] + L-leucyl-tRNA(Leu) = N-terminal L-leucyl-L-aspartyl-[protein] + tRNA(Leu) + H(+). Its function is as follows. Functions in the N-end rule pathway of protein degradation where it conjugates Leu from its aminoacyl-tRNA to the N-termini of proteins containing an N-terminal aspartate or glutamate. The polypeptide is Aspartate/glutamate leucyltransferase (Vibrio campbellii (strain ATCC BAA-1116)).